A 136-amino-acid chain; its full sequence is Large-conductance mechanosensitive channel (136 aa).

Helical transmembrane passes span 9–29 (AFAS…GAAF) and 79–99 (IQTI…VKAI).

The protein belongs to the MscL family. As to quaternary structure, homopentamer.

It is found in the cell inner membrane. Functionally, channel that opens in response to stretch forces in the membrane lipid bilayer. May participate in the regulation of osmotic pressure changes within the cell. This Shewanella baltica (strain OS223) protein is Large-conductance mechanosensitive channel.